A 134-amino-acid chain; its full sequence is Small ribosomal subunit protein uS11 (134 aa).

The protein belongs to the universal ribosomal protein uS11 family. As to quaternary structure, part of the 30S ribosomal subunit. Interacts with proteins S7 and S18. Binds to IF-3.

Located on the platform of the 30S subunit, it bridges several disparate RNA helices of the 16S rRNA. Forms part of the Shine-Dalgarno cleft in the 70S ribosome. The polypeptide is Small ribosomal subunit protein uS11 (Corynebacterium glutamicum (strain R)).